The sequence spans 353 residues: UDP-N-acetylglucosamine--N-acetylmuramyl-(pentapeptide) pyrophosphoryl-undecaprenol N-acetylglucosamine transferase (353 aa).

UDP-N-acetyl-alpha-D-glucosamine-binding positions include 10–12, asparagine 124, serine 183, and glutamine 283; that span reads TGG.

The protein belongs to the glycosyltransferase 28 family. MurG subfamily.

The protein localises to the cell inner membrane. It carries out the reaction di-trans,octa-cis-undecaprenyl diphospho-N-acetyl-alpha-D-muramoyl-L-alanyl-D-glutamyl-meso-2,6-diaminopimeloyl-D-alanyl-D-alanine + UDP-N-acetyl-alpha-D-glucosamine = di-trans,octa-cis-undecaprenyl diphospho-[N-acetyl-alpha-D-glucosaminyl-(1-&gt;4)]-N-acetyl-alpha-D-muramoyl-L-alanyl-D-glutamyl-meso-2,6-diaminopimeloyl-D-alanyl-D-alanine + UDP + H(+). It participates in cell wall biogenesis; peptidoglycan biosynthesis. In terms of biological role, cell wall formation. Catalyzes the transfer of a GlcNAc subunit on undecaprenyl-pyrophosphoryl-MurNAc-pentapeptide (lipid intermediate I) to form undecaprenyl-pyrophosphoryl-MurNAc-(pentapeptide)GlcNAc (lipid intermediate II). This Helicobacter pylori (strain P12) protein is UDP-N-acetylglucosamine--N-acetylmuramyl-(pentapeptide) pyrophosphoryl-undecaprenol N-acetylglucosamine transferase.